A 149-amino-acid polypeptide reads, in one-letter code: Tetracenomycin polyketide synthase protein TcmJ (149 aa).

The region spanning 51 to 117 (HIELAPGESV…NRGNVPARVV (67 aa)) is the Cupin type-2 domain. The segment at 127-149 (PELGHVDTEPVPNPAAAPPKVGG) is disordered.

As to quaternary structure, the tetracenomycin polyketide synthase (TCM PKS) is composed of a ketosynthase complex (TcmKL), an acyl carrier protein (TcmM), a cyclase (TcmN) and a probable second cyclase (TcmJ).

The catalysed reaction is 10 malonyl-CoA + 8 H(+) = tetracenomycin F2 + 10 CO2 + 10 CoA + 2 H2O. Its pathway is antibiotic biosynthesis; tetracenomycin C biosynthesis. In terms of biological role, involved in the biosynthesis of tetracenomycin C (TCM C). Part of a type II polyketide synthase (PKS) that catalyzes the synthesis of tetracenomycin F2 (TCM F2), a precursor of TCM C, from malonyl-CoA. TcmJ, while not absolutely required, greatly increases the tetracenomycin F2 production. It probably acts as a cyclase. This is Tetracenomycin polyketide synthase protein TcmJ from Streptomyces glaucescens.